We begin with the raw amino-acid sequence, 1154 residues long: MRVSKVKVKDGGKDKMVLVHRKTTGAQLVYSGQPVSNETSNILPEKKRQSFDLSTLNKTIIKFDTAKKQKLNVDQYKIVEKIFKYPKQELPKQIKAEEILPFLNHKFQEPVKYWKNGKEESFNLTLLIVEAVQAQDKRKLQPYYDWKTWYIQTKSDLLKKSIENNRIDLTENLSKRKKALLAWETEFTASGSIDLTHYHKVYMTDVLCKMLQDVKPLTDDKGKINTNAYHRGLKKALQNHQPAIFGTREVPNEANRADNQLSIYHLEVVKYLEHYFPIKTSKRRNTADDIAHYLKAQTLKTTIEKQLVNAIRANIIQQGKTNHHELKADTTSNDLIRIKTNEAFVLNLTGTCAFAANNIRNMVDNEQTNDILGKGDFIKSLLKDNTNSQLYSFFFGEGLSTNKAEKETQLWGIRGAVQQIRNNVNHYKKDALKTVFNISNFENPTITDPKQQTNYADTIYKARFINELEKIPEAFAQQLKTGGAVSYYTIENLKSLLTTFQFSLCRSTIPFAPGFKKVFNGGINYQNAKQDESFYELMLEQYLRKENFAEESYNARYFMLKLIYNNLFLPGFTTDRKAFADSVGFVQMQNKKQAEKVNPRKKEAYAFEAVRPMTAADSIADYMAYVQSELMQEQNKKEEKVAEETRINFEKFVLQVFIKGFDSFLRAKEFDFVQMPQPQLTATASNQQKADKLNQLEASITADCKLTPQYAKADDATHIAFYVFCKLLDAAHLSNLRNELIKFRESVNEFKFHHLLEIIEICLLSADVVPTDYRDLYSSEADCLARLRPFIEQGADITNWSDLFVQSDKHSPVIHANIELSVKYGTTKLLEQIINKDTQFKTTEANFTAWNTAQKSIEQLIKQREDHHEQWVKAKNADDKEKQERKREKSNFAQKFIEKHGDDYLDICDYINTYNWLDNKMHFVHLNRLHGLTIELLGRMAGFVALFDRDFQFFDEQQIADEFKLHGFVNLHSIDKKLNEVPTKKIKEIYDIRNKIIQINGNKINESVRANLIQFISSKRNYYNNAFLHVSNDEIKEKQMYDIRNHIAHFNYLTKDAADFSLIDLINELRELLHYDRKLKNAVSKAFIDLFDKHGMILKLKLNADHKLKVESLEPKKIYHLGSSAKDKPEYQYCTNQVMMAYCNMCRSLLEMKK.

HEPN-like fold regions lie at residues T330–N466 and F923–K1154.

It belongs to the CRISPR-associated endoribonuclease Cas13a family. A divalent metal cation is required as a cofactor.

Its activity is regulated as follows. Target RNA acts as an activator for non-specific ssRNA degradation. Its function is as follows. CRISPR (clustered regularly interspaced short palindromic repeat), is an adaptive immune system that provides protection against mobile genetic elements (viruses, transposable elements and conjugative plasmids). CRISPR clusters contain sequences complementary to antecedent mobile elements and target invading nucleic acids. Unlike many single-component effectors, this CRISPR-Cas system targets RNA. CRISPR clusters are transcribed from pre-CRISPR RNA (crRNA) and processed into crRNA by this protein. Cleaves linear target ssRNA in a pre-crRNA-dependent fashion, preferentially before U residues. Binding a viable target RNA target activates this protein for non-specific RNA degradation in vitro (called collateral RNA degradation), which is fairly sensitive as it requires picomolar levels of viable target RNA. This is CRISPR-associated endoribonuclease Cas13a from Paludibacter propionicigenes (strain DSM 17365 / JCM 13257 / WB4).